A 93-amino-acid chain; its full sequence is Small ribosomal subunit protein uS19 (93 aa).

It belongs to the universal ribosomal protein uS19 family.

Protein S19 forms a complex with S13 that binds strongly to the 16S ribosomal RNA. The protein is Small ribosomal subunit protein uS19 of Dehalococcoides mccartyi (strain ATCC BAA-2100 / JCM 16839 / KCTC 5957 / BAV1).